The chain runs to 474 residues: Ribulose bisphosphate carboxylase large chain (474 aa).

Substrate contacts are provided by N117 and T167. Residue K169 is the Proton acceptor of the active site. K171 contributes to the substrate binding site. Positions 195, 197, and 198 each coordinate Mg(2+). K195 bears the N6-carboxylysine mark. The active-site Proton acceptor is H288. Substrate-binding residues include R289, H321, and S373.

The protein belongs to the RuBisCO large chain family. Type I subfamily. Heterohexadecamer of 8 large chains and 8 small chains. Requires Mg(2+) as cofactor.

The catalysed reaction is 2 (2R)-3-phosphoglycerate + 2 H(+) = D-ribulose 1,5-bisphosphate + CO2 + H2O. It catalyses the reaction D-ribulose 1,5-bisphosphate + O2 = 2-phosphoglycolate + (2R)-3-phosphoglycerate + 2 H(+). Its function is as follows. RuBisCO catalyzes two reactions: the carboxylation of D-ribulose 1,5-bisphosphate, the primary event in carbon dioxide fixation, as well as the oxidative fragmentation of the pentose substrate. Both reactions occur simultaneously and in competition at the same active site. The sequence is that of Ribulose bisphosphate carboxylase large chain from Hydrogenophilus thermoluteolus (Pseudomonas hydrogenothermophila).